The primary structure comprises 477 residues: Ribulose bisphosphate carboxylase large chain (477 aa).

A propeptide spanning residues 1–2 is cleaved from the precursor; the sequence is MS. Position 3 is an N-acetylproline (Pro-3). Lys-14 is subject to N6,N6,N6-trimethyllysine. Residues Asn-123 and Thr-173 each coordinate substrate. Catalysis depends on Lys-175, which acts as the Proton acceptor. Lys-177 lines the substrate pocket. Mg(2+)-binding residues include Lys-201, Asp-203, and Glu-204. Lys-201 carries the post-translational modification N6-carboxylysine. His-294 acts as the Proton acceptor in catalysis. Residues Arg-295, His-327, and Ser-379 each coordinate substrate.

The protein belongs to the RuBisCO large chain family. Type I subfamily. In terms of assembly, heterohexadecamer of 8 large chains and 8 small chains; disulfide-linked. The disulfide link is formed within the large subunit homodimers. Mg(2+) serves as cofactor. Post-translationally, the disulfide bond which can form in the large chain dimeric partners within the hexadecamer appears to be associated with oxidative stress and protein turnover.

Its subcellular location is the plastid. It localises to the chloroplast. It carries out the reaction 2 (2R)-3-phosphoglycerate + 2 H(+) = D-ribulose 1,5-bisphosphate + CO2 + H2O. It catalyses the reaction D-ribulose 1,5-bisphosphate + O2 = 2-phosphoglycolate + (2R)-3-phosphoglycerate + 2 H(+). Its function is as follows. RuBisCO catalyzes two reactions: the carboxylation of D-ribulose 1,5-bisphosphate, the primary event in carbon dioxide fixation, as well as the oxidative fragmentation of the pentose substrate in the photorespiration process. Both reactions occur simultaneously and in competition at the same active site. The sequence is that of Ribulose bisphosphate carboxylase large chain from Atropa belladonna (Belladonna).